A 201-amino-acid chain; its full sequence is Peptidyl-tRNA hydrolase (201 aa).

Position 14 (Tyr14) interacts with tRNA. The Proton acceptor role is filled by His19. TRNA contacts are provided by Tyr64, Asn66, and Asn112.

The protein belongs to the PTH family. As to quaternary structure, monomer.

It is found in the cytoplasm. The catalysed reaction is an N-acyl-L-alpha-aminoacyl-tRNA + H2O = an N-acyl-L-amino acid + a tRNA + H(+). Its function is as follows. Hydrolyzes ribosome-free peptidyl-tRNAs (with 1 or more amino acids incorporated), which drop off the ribosome during protein synthesis, or as a result of ribosome stalling. Catalyzes the release of premature peptidyl moieties from peptidyl-tRNA molecules trapped in stalled 50S ribosomal subunits, and thus maintains levels of free tRNAs and 50S ribosomes. This chain is Peptidyl-tRNA hydrolase, found in Rhodopseudomonas palustris (strain BisB18).